A 387-amino-acid chain; its full sequence is O-methyltransferase asqD (387 aa).

S-adenosyl-L-methionine is bound at residue Asp-252. The Proton acceptor role is filled by His-294.

This sequence belongs to the class I-like SAM-binding methyltransferase superfamily. Cation-independent O-methyltransferase family.

It functions in the pathway secondary metabolite biosynthesis. It participates in alkaloid biosynthesis. Its pathway is mycotoxin biosynthesis. Functionally, O-methyltransferase; part of the gene cluster that mediates the biosynthesis of the aspoquinolone mycotoxins. The role of asqD within the aspoquinolone pathway has still to be determined. The first step of the pathway is catalyzed by the nonribosomal peptide synthetase asqK that condenses anthranilic acid and O-methyl-L-tyrosine to produce 4'-methoxycyclopeptin. 4'-methoxycyclopeptin is then converted to 4'-methoxydehydrocyclopeptin by the ketoglutarate-dependent dioxygenase asqJ. AsqJ also converts its first product 4'-methoxydehydrocyclopeptin to 4'-methoxycyclopenin. The following conversion of 4'-methoxycyclopenin into 4'-methoxyviridicatin is catalyzed by the cyclopenase asqI. 4'-methoxyviridicatin is the precursor of quinolone natural products, and is further converted to quinolinone B. The prenyltransferase asqH1 then catalyzes the canonical Friedel-Crafts alkylation of quinolinone B with dimethylallyl cation to yield dimethylallyl quinolone, which is subjected to FAD-dependent dehydrogenation by the FAD-linked oxidoreductase asqF to yield conjugated aryl diene. The delta(3') double bond then serves as the site of the second alkylation with DMAPP catalyzed by the prenyltransferase asqH2 to yield a carbenium ion intermediate, which can be attacked by H(2)O to yield a styrenyl quinolone containing a C3'-hydroxyprenyl chain. The FAD-dependent monooxygenase asqG performs epoxidation of the terminal C7'-C8' olefin. Finally, after dehydratation of the epoxide at C3 by asqC, the quinolone epoxide rearrangement protein asqO catalyzes an enzymatic 3-exo-tet cyclization to yield the cyclopropyl-THF ring system in aspoquinolone. The protein is O-methyltransferase asqD of Emericella nidulans (strain FGSC A4 / ATCC 38163 / CBS 112.46 / NRRL 194 / M139) (Aspergillus nidulans).